A 442-amino-acid chain; its full sequence is tRNA modification GTPase MnmE (442 aa).

Arg27, Glu84, and Lys124 together coordinate (6S)-5-formyl-5,6,7,8-tetrahydrofolate. Residues 221–366 (GLHVVIVGAP…LLDALQAFAE (146 aa)) form the TrmE-type G domain. Residues 231 to 236 (NAGKSS), 250 to 256 (SEEAGTT), and 275 to 278 (DTAG) each bind GTP. Mg(2+) is bound by residues Ser235 and Thr256. (6S)-5-formyl-5,6,7,8-tetrahydrofolate is bound at residue Lys442.

This sequence belongs to the TRAFAC class TrmE-Era-EngA-EngB-Septin-like GTPase superfamily. TrmE GTPase family. Homodimer. Heterotetramer of two MnmE and two MnmG subunits. K(+) serves as cofactor.

Its subcellular location is the cytoplasm. Exhibits a very high intrinsic GTPase hydrolysis rate. Involved in the addition of a carboxymethylaminomethyl (cmnm) group at the wobble position (U34) of certain tRNAs, forming tRNA-cmnm(5)s(2)U34. This is tRNA modification GTPase MnmE from Brucella melitensis biotype 1 (strain ATCC 23456 / CCUG 17765 / NCTC 10094 / 16M).